Here is an 89-residue protein sequence, read N- to C-terminus: Small ribosomal subunit protein uS15 (89 aa).

The protein belongs to the universal ribosomal protein uS15 family. As to quaternary structure, part of the 30S ribosomal subunit. Forms a bridge to the 50S subunit in the 70S ribosome, contacting the 23S rRNA.

Functionally, one of the primary rRNA binding proteins, it binds directly to 16S rRNA where it helps nucleate assembly of the platform of the 30S subunit by binding and bridging several RNA helices of the 16S rRNA. Forms an intersubunit bridge (bridge B4) with the 23S rRNA of the 50S subunit in the ribosome. The sequence is that of Small ribosomal subunit protein uS15 from Shouchella clausii (strain KSM-K16) (Alkalihalobacillus clausii).